A 633-amino-acid chain; its full sequence is Pesticidal crystal protein Cry2Aa (633 aa).

The protein belongs to the delta endotoxin family.

Functionally, promotes colloidosmotic lysis by binding to the midgut epithelial cells of both dipteran (Aedes aegypti) and lepidopteran (Manduca sexta) larvae. In Bacillus thuringiensis subsp. kurstaki, this protein is Pesticidal crystal protein Cry2Aa (cry2Aa).